Reading from the N-terminus, the 476-residue chain is WASH complex subunit 1 (476 aa).

Residues 1–54 are required for WASH complex assembly; the sequence is MTTVAQKHFLEGQTYSVPLIQPDLRREEAVQQVADALQYLQKVSGDIFNRISQR. Disordered regions lie at residues 273-412 and 427-476; these read SAPS…QGGD and GISG…DWES. Residues 284–296 show a composition bias toward polar residues; the sequence is TFSTESVEPSQAD. The segment covering 302–333 has biased composition (pro residues); that stretch reads LLPPPPPPPPPPPPVMPTTVPPPPPLPQPTAP. A VCA region spans residues 354–476; the sequence is QGAPKEVVNP…GEEDEDDWES (123 aa). The region spanning 366-388 is the WH2 domain; the sequence is GRASLLESIRQAGGIGKANLRSV. Positions 387–403 are enriched in basic and acidic residues; the sequence is SVKERKLEKKKQKEQEQ. Positions 467–476 are enriched in acidic residues; it reads GEEDEDDWES.

It belongs to the WASH1 family. As to quaternary structure, component of the WASH complex.

The protein resides in the early endosome membrane. It is found in the recycling endosome membrane. Functionally, acts as a nucleation-promoting factor at the surface of endosomes, where it recruits and activates the Arp2/3 complex to induce actin polymerization, playing a key role in the fission of tubules that serve as transport intermediates during endosome sorting. This is WASH complex subunit 1 from Gallus gallus (Chicken).